Here is a 702-residue protein sequence, read N- to C-terminus: Polyribonucleotide nucleotidyltransferase (702 aa).

Asp485 and Asp491 together coordinate Mg(2+). Residues 552-611 enclose the KH domain; the sequence is PKTSTLQIDPEKIRDVIGAGGKVINKIIADTGVKIDIKEDGLVYVSSAESEGVKEAVKII. An S1 motif domain is found at 621 to 689; sequence GEIYLGKVTK…SQGRINLSRK (69 aa).

Belongs to the polyribonucleotide nucleotidyltransferase family. It depends on Mg(2+) as a cofactor.

Its subcellular location is the cytoplasm. It catalyses the reaction RNA(n+1) + phosphate = RNA(n) + a ribonucleoside 5'-diphosphate. Involved in mRNA degradation. Catalyzes the phosphorolysis of single-stranded polyribonucleotides processively in the 3'- to 5'-direction. The protein is Polyribonucleotide nucleotidyltransferase of Clostridium perfringens (strain ATCC 13124 / DSM 756 / JCM 1290 / NCIMB 6125 / NCTC 8237 / Type A).